A 197-amino-acid polypeptide reads, in one-letter code: Phosphoheptose isomerase (197 aa).

One can recognise an SIS domain in the interval 36–197 (MVNALLNEGK…IDSQLFGSEE (162 aa)). 51-53 (NGG) contributes to the substrate binding site. Residues His-60 and Glu-64 each contribute to the Zn(2+) site. Residues Glu-64, 93-94 (ND), 119-121 (STS), Ser-124, and Gln-174 each bind substrate. Residues Gln-174 and His-182 each contribute to the Zn(2+) site.

It belongs to the SIS family. GmhA subfamily. In terms of assembly, homotetramer. The cofactor is Zn(2+).

The protein localises to the cytoplasm. The catalysed reaction is 2 D-sedoheptulose 7-phosphate = D-glycero-alpha-D-manno-heptose 7-phosphate + D-glycero-beta-D-manno-heptose 7-phosphate. The protein operates within carbohydrate biosynthesis; D-glycero-D-manno-heptose 7-phosphate biosynthesis; D-glycero-alpha-D-manno-heptose 7-phosphate and D-glycero-beta-D-manno-heptose 7-phosphate from sedoheptulose 7-phosphate: step 1/1. Functionally, catalyzes the isomerization of sedoheptulose 7-phosphate in D-glycero-D-manno-heptose 7-phosphate. The polypeptide is Phosphoheptose isomerase (Pseudomonas syringae pv. syringae (strain B728a)).